A 399-amino-acid chain; its full sequence is Chorismate synthase (399 aa).

NADP(+) contacts are provided by Arg40 and Arg46. FMN-binding positions include 135-137 (RAS), 256-257 (QA), Gly301, 316-320 (KPIAT), and Arg342.

The protein belongs to the chorismate synthase family. Homotetramer. FMNH2 serves as cofactor.

It catalyses the reaction 5-O-(1-carboxyvinyl)-3-phosphoshikimate = chorismate + phosphate. It functions in the pathway metabolic intermediate biosynthesis; chorismate biosynthesis; chorismate from D-erythrose 4-phosphate and phosphoenolpyruvate: step 7/7. Its function is as follows. Catalyzes the anti-1,4-elimination of the C-3 phosphate and the C-6 proR hydrogen from 5-enolpyruvylshikimate-3-phosphate (EPSP) to yield chorismate, which is the branch point compound that serves as the starting substrate for the three terminal pathways of aromatic amino acid biosynthesis. This reaction introduces a second double bond into the aromatic ring system. The protein is Chorismate synthase of Paenarthrobacter aurescens (strain TC1).